Here is a 236-residue protein sequence, read N- to C-terminus: CHD1 helical C-terminal domain containing protein 1 (236 aa).

The tract at residues 1–29 (MEASDWQGGEGDKPLEKVGSVPCLERSSS) is disordered. Residues 44-145 (LSQDTFKICK…TNQTAKFLAA (102 aa)) are CHD1 helical C-terminal domain (CHCT). The disordered stretch occupies residues 197-236 (LEEPRSSHCSRGDSLRKLPQKPKLKKKRIKERLESPKSCS). Positions 198 to 212 (EEPRSSHCSRGDSLR) are enriched in basic and acidic residues. A compositionally biased stretch (basic residues) spans 214–226 (LPQKPKLKKKRIK). Basic and acidic residues predominate over residues 227–236 (ERLESPKSCS).

Exclusively expressed in testes.

It localises to the cytoplasm. Its subcellular location is the nucleus. Its function is as follows. May play a role in regulation of apoptosis. This is CHD1 helical C-terminal domain containing protein 1 (Chct1) from Mus musculus (Mouse).